Reading from the N-terminus, the 517-residue chain is Gamma-1-syntrophin (517 aa).

Residues 57 to 140 (TVTIRRQTVG…EVTLTVSFLK (84 aa)) form the PDZ domain. Residues 283–390 (QIVYMGWCEA…WERAFQTATF (108 aa)) form the PH domain.

The protein belongs to the syntrophin family. In terms of assembly, isoform 1, but not isoform 2, interacts with the dystrophin protein DMD and related proteins DTNA and DTNB. Interacts with DGKZ. As to expression, brain specific. In CNS, it is expressed in the perikaryon and proximal portion of the neuronal processes. Strong expression in the hippocampus, neuron-rich dendate granule cells, and pyramidal cell layers. Highly expressed in neurons of the cerebral cortex. Also expressed in the cerebellar cortex, deep cerebellar nuclei, thalamus, and basal ganglia. No expression in muscle cells.

Its subcellular location is the cytoplasm. The protein resides in the cytoskeleton. It localises to the nucleus. Functionally, adapter protein that binds to and probably organizes the subcellular localization of a variety of proteins. May link various receptors to the actin cytoskeleton and the dystrophin glycoprotein complex. May participate in regulating the subcellular location of diacylglycerol kinase-zeta to ensure that diacylglycerol is rapidly inactivated following receptor activation. This Homo sapiens (Human) protein is Gamma-1-syntrophin (SNTG1).